Consider the following 255-residue polypeptide: 5'-nucleotidase SurE (255 aa).

The a divalent metal cation site is built by Asp8, Asp9, Ser40, and Asn93.

The protein belongs to the SurE nucleotidase family. A divalent metal cation serves as cofactor.

It is found in the cytoplasm. It carries out the reaction a ribonucleoside 5'-phosphate + H2O = a ribonucleoside + phosphate. In terms of biological role, nucleotidase that shows phosphatase activity on nucleoside 5'-monophosphates. The polypeptide is 5'-nucleotidase SurE (Rhodopseudomonas palustris (strain BisB5)).